Reading from the N-terminus, the 89-residue chain is Myrmicitoxin(1)-Pr2c (89 aa).

The N-terminal stretch at 1-23 (MEIPKLLYIAVIAIGLSGSLTCA) is a signal peptide. A propeptide spanning residues 24 to 61 (TPLANPWADPEAEANPKAKATAEATAEAIAEALAEPEP) is cleaved from the precursor. Asn-88 bears the Asparagine amide mark.

It belongs to the formicidae venom clade 1 family. Expressed by the venom gland.

It localises to the secreted. Vertebrate-selective toxin that causes pain by targeting voltage-gated sodium channels. In Pogonomyrmex rugosus (Desert harvester ant), this protein is Myrmicitoxin(1)-Pr2c.